A 138-amino-acid chain; its full sequence is Small ribosomal subunit protein uS12 (138 aa).

A disordered region spans residues 1-20; sequence MPTISQLINHGRSAKTSKSK. Asp102 is modified (3-methylthioaspartic acid). The segment at 116–138 is disordered; the sequence is DAAGVDKRKQGRSIYGTKKPKEN.

It belongs to the universal ribosomal protein uS12 family. Part of the 30S ribosomal subunit. Contacts proteins S8 and S17. May interact with IF1 in the 30S initiation complex.

In terms of biological role, with S4 and S5 plays an important role in translational accuracy. Its function is as follows. Interacts with and stabilizes bases of the 16S rRNA that are involved in tRNA selection in the A site and with the mRNA backbone. Located at the interface of the 30S and 50S subunits, it traverses the body of the 30S subunit contacting proteins on the other side and probably holding the rRNA structure together. The combined cluster of proteins S8, S12 and S17 appears to hold together the shoulder and platform of the 30S subunit. This chain is Small ribosomal subunit protein uS12, found in Metamycoplasma arthritidis (strain 158L3-1) (Mycoplasma arthritidis).